The chain runs to 294 residues: 4-hydroxy-tetrahydrodipicolinate synthase (294 aa).

Thr45 is a pyruvate binding site. The Proton donor/acceptor role is filled by Tyr133. Lys161 acts as the Schiff-base intermediate with substrate in catalysis. Ile203 is a pyruvate binding site.

This sequence belongs to the DapA family. Homotetramer; dimer of dimers.

It localises to the cytoplasm. The catalysed reaction is L-aspartate 4-semialdehyde + pyruvate = (2S,4S)-4-hydroxy-2,3,4,5-tetrahydrodipicolinate + H2O + H(+). Its pathway is amino-acid biosynthesis; L-lysine biosynthesis via DAP pathway; (S)-tetrahydrodipicolinate from L-aspartate: step 3/4. In terms of biological role, catalyzes the condensation of (S)-aspartate-beta-semialdehyde [(S)-ASA] and pyruvate to 4-hydroxy-tetrahydrodipicolinate (HTPA). The protein is 4-hydroxy-tetrahydrodipicolinate synthase of Buchnera aphidicola subsp. Baizongia pistaciae (strain Bp).